Reading from the N-terminus, the 398-residue chain is Phytoene synthase 2, chloroplastic (398 aa).

Residues 1–80 constitute a chloroplast transit peptide; the sequence is MASSSSAAAL…EEAVYEVVLR (80 aa).

It belongs to the phytoene/squalene synthase family. Expressed in leaves and endosperm. Expressed in developing leaves.

The protein resides in the plastid. It localises to the chloroplast membrane. It is found in the chloroplast. Its subcellular location is the plastoglobule. It catalyses the reaction 2 (2E,6E,10E)-geranylgeranyl diphosphate = 15-cis-phytoene + 2 diphosphate. Functionally, catalyzes the conversion of geranylgeranyl diphosphate to phytoene. Mediates the first committed step in carotenoid biosynthesis. The chain is Phytoene synthase 2, chloroplastic from Oryza sativa subsp. japonica (Rice).